The following is a 281-amino-acid chain: Cell growth regulator with EF hand domain protein 1 (281 aa).

The first 21 residues, 1 to 21 (MFQWLMQALMLPLLLLPLGRA), serve as a signal peptide directing secretion. 2 EF-hand domains span residues 71–106 (DREQVLLSLFALHDYDQNGQLDGLELLSMLTAALAP) and 115–150 (PVILVVDSVLETQDLDGDGLMTPAELINFPEVPKHT). Ca(2+) is bound by residues aspartate 84, aspartate 86, asparagine 88, glutamine 90, glutamate 95, aspartate 128, aspartate 130, aspartate 132, and glutamate 139. Positions 148 to 281 (KHTESLPPAL…HSIQLENDEI (134 aa)) are disordered. Residues 168 to 183 (LLANSPLQSETQQSLG) are compositionally biased toward polar residues. Residues 184 to 213 (TKEEIRGQVEAKRASLEPEQEAGHQTEGKV) show a composition bias toward basic and acidic residues. Phosphoserine occurs at positions 217 and 228. Over residues 237–256 (EGAEEQVEIKDNEGEAKELL) the composition is skewed to basic and acidic residues.

Post-translationally, probably digested extracellularly by an unknown serine protease generating extremely hydrophobic bioactive peptides.

It localises to the secreted. Its function is as follows. Mediates cell-cell adhesion in a calcium-dependent manner. Able to inhibit growth in several cell lines. In Mus musculus (Mouse), this protein is Cell growth regulator with EF hand domain protein 1.